A 263-amino-acid chain; its full sequence is Neurovirulence factor ICP34.5 (263 aa).

Basic residues predominate over residues 1–14; the sequence is MARRRRHRGPRRPR. A required for nucleolar localization region spans residues 1–16; sequence MARRRRHRGPRRPRPP. Disordered stretches follow at residues 1–128 and 149–190; these read MARR…PFRL and RRAG…PATP. Residues 24–35 are compositionally biased toward polar residues; that stretch reads TAQSQVTSTPNS. A compositionally biased stretch (pro residues) spans 45 to 58; the sequence is AAPPPPPASGPPPS. Acidic residues predominate over residues 73-83; sequence ASDDDDDDDWP. 2 stretches are compositionally biased toward pro residues: residues 84 to 93 and 119 to 128; these read DSPPPEPAPE and SHPPSRPFRL. The short motif at 128–137 is the Nuclear export signal element; sequence LPPRLALRLR. A run of 10 repeats spans residues 161-163, 164-166, 167-169, 170-172, 173-175, 176-178, 179-181, 182-184, 185-187, and 188-190. The tract at residues 161-190 is 10 X 3 AA tandem repeats of A-T-P; it reads ATPATPATPATPATPATPATPATPATPATP. Low complexity predominate over residues 164 to 190; sequence ATPATPATPATPATPATPATPATPATP. The interaction with host PPP1CA stretch occupies residues 190 to 203; the sequence is PARVRFSPHVRVRH. The interval 205–263 is important for interferon resistance; that stretch reads VVWASAARLARRGSWARERADRARFRRRVAEAEAVIGPCLGPEARARALARGAGPANSV. The Bipartite nuclear localization signal signature appears at 215–233; it reads RRGSWARERADRARFRRRV. The segment at 233-248 is interaction with host EIF2S1/EIF-2ALPHA; that stretch reads VAEAEAVIGPCLGPEA.

This sequence belongs to the PPP1R15 family. In terms of assembly, interacts with host PPP1CA; this interaction to forms a high-molecular-weight complex that dephosphorylates EIF2S1/eIF-2alpha. Interacts with host EIF2S1/eIF-2alpha; this interaction is crucial for the specific dephosphorylation of EIF2S1/eIF-2alpha by PPP1CA. Binds to proliferating cell nuclear antigen (PCNA), which may release host cells from growth arrest and facilitate viral replication. Interacts (via N-terminus) with host C1QBP; this interaction allows C1QBP to be recruited to the inner nuclear membrane by ICP34.5. Interacts with host PRKCA. Interacts with protein UL31. Interacts with host STING/TMEM173; this interaction inhibits the intracellular DNA sensing pathway. Interacts with host BECN1; this interaction modulates host autophagy.

The protein localises to the host cytoplasm. Its subcellular location is the host nucleus. The protein resides in the host nucleolus. It localises to the virion. In terms of biological role, inhibits the establishment of the immune response and of the integrated stress response (ISR) in the infected cell. Plays essential roles in viral nuclear egress to mediate capsid transit across the nuclear membrane. Facilitates nuclear egress cooperatively with host C1QBP and protein kinase C/PKC to induce lamin A/C phosphorylation and subsequent reorganization. In turn, lamina disassembles and nuclear egress occurs. Recruits the serine/threonine protein phosphatase PPP1CA/PP1-alpha to dephosphorylate the translation initiation factor EIF2S1/eIF-2alpha, thereby couteracting the host shutoff of protein synthesis involving double-stranded RNA-dependent protein kinase EIF2AK2/PKR. In turn, controls host IRF3 activation and subsequently inhibits host interferon response. Controls the DNA sensing pathway by interacting with and inhibiting host STING/TMEM173. Also down-modulates the host MHC class II proteins cell surface expression. Acts as a neurovirulence factor that has a profound effect on the growth of the virus in central nervous system tissue, by interacting with host BECN1 and thereby antagonizing the host autophagy response. The chain is Neurovirulence factor ICP34.5 (RL1) from Human herpesvirus 1 (strain F) (HHV-1).